A 127-amino-acid polypeptide reads, in one-letter code: Large ribosomal subunit protein bL12 (127 aa).

This sequence belongs to the bacterial ribosomal protein bL12 family. As to quaternary structure, homodimer. Part of the ribosomal stalk of the 50S ribosomal subunit. Forms a multimeric L10(L12)X complex, where L10 forms an elongated spine to which 2 to 4 L12 dimers bind in a sequential fashion. Binds GTP-bound translation factors.

Functionally, forms part of the ribosomal stalk which helps the ribosome interact with GTP-bound translation factors. Is thus essential for accurate translation. The chain is Large ribosomal subunit protein bL12 from Carboxydothermus hydrogenoformans (strain ATCC BAA-161 / DSM 6008 / Z-2901).